Here is a 786-residue protein sequence, read N- to C-terminus: MTDAAQRISELRNELDAHNYRYYVLDEPSVPDAEYDRLFRELQALEAEHPELVTPESPTQRVGGEALSAFGEVRHEVPMLSLGNAFEEDDLRAFDRSVQSGLGLAGGDLFGGGAEVEYSCEPKLDGLAVSLRYENGQLVRGATRGDGSTGEDISANVRTIRNVPLKLQGEGWPQVLEVRGEVFMPKAGFEELNARQAEAGGKTFANPRNAAAGSLRQLDPKITASRPLEFCCYGVGQVSGELPGTQVAMLQQLKAWGIPISRELKLAKGVEACLDYYRDIGQRRMSLAYDIDGVVFKVNNIEDQQQLGFRARTPHWAIAHKFPAQEELTELLDVEFQVGRTGAVTPVARLKPVKVAGVMVANATLHNMDEVARLGVMIGDTVIIRRAGDVIPQVMAVVPERRPADARPVHIPEQCPVCGSAVERTQLIKRSKGKASVSEGSVYRCVGRLSCQAQLKQAIIHFVSRRAMDIEGLGDKTIEQLVDEKLIGSPADLYKLTYEQIIGLEGFAEVSSNKLLAAIENSKRPSLARFIYALGIPDVGEETAKVLARSLASLERVRQALPEVLTYLPDIGLEVAHEIHSFFEDAHNQQVISALLGECGLELQDEGELSAEFSAVATLGGMLDKLNIPTVGPGAAQKLAERFGSLEGVLNGDWLDMRQALPERQAKAVREFFDETANAQRARAIEQQLREFGMHWESEKKVAEGLPLAGQTWVLTGTLEVMSRDVAKEKLESLGAKVAGSVSAKTHCVVAGPGAGSKLAKASELGVKVLDEAQFLEQLKSYGIEA.

NAD(+)-binding positions include 32 to 36 (DAEYD), 81 to 82 (SL), and E121. The active-site N6-AMP-lysine intermediate is K123. The NAD(+) site is built by R144, E181, K297, and K321. Zn(2+) is bound by residues C415, C418, C445, and C451. A BRCT domain is found at 703–786 (AEGLPLAGQT…EQLKSYGIEA (84 aa)).

This sequence belongs to the NAD-dependent DNA ligase family. LigA subfamily. Mg(2+) serves as cofactor. The cofactor is Mn(2+).

It carries out the reaction NAD(+) + (deoxyribonucleotide)n-3'-hydroxyl + 5'-phospho-(deoxyribonucleotide)m = (deoxyribonucleotide)n+m + AMP + beta-nicotinamide D-nucleotide.. In terms of biological role, DNA ligase that catalyzes the formation of phosphodiester linkages between 5'-phosphoryl and 3'-hydroxyl groups in double-stranded DNA using NAD as a coenzyme and as the energy source for the reaction. It is essential for DNA replication and repair of damaged DNA. The sequence is that of DNA ligase from Ectopseudomonas mendocina (strain ymp) (Pseudomonas mendocina).